The sequence spans 581 residues: Invertase (581 aa).

An N-terminal signal peptide occupies residues 1 to 22 (MFLKYILASGICLVSLLSSTNA). 6 N-linked (GlcNAc...) asparagine glycosylation sites follow: N37, N40, N46, N57, N62, and N79. Substrate-binding positions include 94–97 (FMND), Q113, and 158–159 (FS). The active site involves D97. N-linked (GlcNAc...) asparagine glycans are attached at residues N168 and N175. Substrate contacts are provided by residues 227–228 (RD) and E280. N-linked (GlcNAc...) asparagine glycosylation occurs at N322. Residue W366 participates in substrate binding. Residues N399, N409, N425, N446, N452, N519, and N569 are each glycosylated (N-linked (GlcNAc...) asparagine).

Belongs to the glycosyl hydrolase 32 family. Glycosylated; contains 67% carbohydrates. This is composed of equimolar amounts of mannose and galactose. There is also a small amount of glucosamine present.

The enzyme catalyses Hydrolysis of terminal non-reducing beta-D-fructofuranoside residues in beta-D-fructofuranosides.. The polypeptide is Invertase (inv1) (Schizosaccharomyces pombe (strain 972 / ATCC 24843) (Fission yeast)).